A 503-amino-acid polypeptide reads, in one-letter code: 2,3-bisphosphoglycerate-independent phosphoglycerate mutase (503 aa).

Asp10 and Ser60 together coordinate Mn(2+). Ser60 acts as the Phosphoserine intermediate in catalysis. Substrate-binding positions include His121, 150 to 151, Arg181, Arg187, 256 to 259, and Lys330; these read RD and RPDR. The Mn(2+) site is built by Asp396, His400, Asp437, His438, and His455.

This sequence belongs to the BPG-independent phosphoglycerate mutase family. Monomer. It depends on Mn(2+) as a cofactor.

The enzyme catalyses (2R)-2-phosphoglycerate = (2R)-3-phosphoglycerate. It functions in the pathway carbohydrate degradation; glycolysis; pyruvate from D-glyceraldehyde 3-phosphate: step 3/5. In terms of biological role, catalyzes the interconversion of 2-phosphoglycerate and 3-phosphoglycerate. The protein is 2,3-bisphosphoglycerate-independent phosphoglycerate mutase of Mycoplasmoides gallisepticum (strain R(low / passage 15 / clone 2)) (Mycoplasma gallisepticum).